The following is a 149-amino-acid chain: Alpha-crystallin A chain (149 aa).

Residues 41 to 149 (LFRSVLESGI…DASHGERPIP (109 aa)) enclose the sHSP domain. His89, Glu91, His96, and His143 together coordinate Zn(2+).

The protein belongs to the small heat shock protein (HSP20) family. In terms of assembly, heteropolymer composed of three CRYAA and one CRYAB subunits. Inter-subunit bridging via zinc ions enhances stability, which is crucial as there is no protein turn over in the lens. Can also form homodimers and homotetramers (dimers of dimers) which serve as the building blocks of homooligomers. Within homooligomers, the zinc-binding motif is created from residues of 3 different molecules. His-89 and Glu-91 from one molecule are ligands of the zinc ion, and His-96 and His-143 residues from additional molecules complete the site with tetrahedral coordination geometry. Part of a complex required for lens intermediate filament formation composed of BFSP1, BFSP2 and CRYAA.

It is found in the cytoplasm. Its subcellular location is the nucleus. Functionally, contributes to the transparency and refractive index of the lens. May act as a chaperone, preventing aggregation of various proteins under a wide range of stress conditions. The chain is Alpha-crystallin A chain (CRYAA) from Columba livia (Rock dove).